The following is a 391-amino-acid chain: Steroid side-chain-cleaving aldolase (391 aa).

Tyr294 (proton acceptor) is an active-site residue. Tyr344 (proton donor) is an active-site residue.

It belongs to the thiolase-like superfamily. In terms of assembly, homodimer. Interacts with the ChsH1/ChsH2 hydratase via the DUF35 C-terminal region of ChsH2 (ChsH2-DUF35).

It catalyses the reaction 17-hydroxy-3-oxochol-4-en-22-oyl-CoA = androst-4-ene-3,17-dione + propanoyl-CoA. Its function is as follows. Probably involved in bile acid degradation. In vitro, when associated with the ChsH1/ChsH2 hydratase, catalyzes the retroaldol cleavage of 17-hydroxy-3-oxo-4-pregnene-20-carboxyl-CoA (17-HOPC-CoA), forming androst-4-ene-3,17-dione and propionyl-CoA. The in vivo substrate is probably a closely analogous bile acid degradation metabolite. The sequence is that of Steroid side-chain-cleaving aldolase from Thermomonospora curvata (strain ATCC 19995 / DSM 43183 / JCM 3096 / KCTC 9072 / NBRC 15933 / NCIMB 10081 / Henssen B9).